The chain runs to 786 residues: Endonuclease MutS2 (786 aa).

Residue 333–340 (GPNTGGKT) coordinates ATP. In terms of domain architecture, Smr spans 711 to 786 (LDLRGERYDQ…GSGATIVNFK (76 aa)).

The protein belongs to the DNA mismatch repair MutS family. MutS2 subfamily. As to quaternary structure, homodimer. Binds to stalled ribosomes, contacting rRNA.

Functionally, endonuclease that is involved in the suppression of homologous recombination and thus may have a key role in the control of bacterial genetic diversity. In terms of biological role, acts as a ribosome collision sensor, splitting the ribosome into its 2 subunits. Detects stalled/collided 70S ribosomes which it binds and splits by an ATP-hydrolysis driven conformational change. Acts upstream of the ribosome quality control system (RQC), a ribosome-associated complex that mediates the extraction of incompletely synthesized nascent chains from stalled ribosomes and their subsequent degradation. Probably generates substrates for RQC. This chain is Endonuclease MutS2, found in Lacticaseibacillus paracasei (strain ATCC 334 / BCRC 17002 / CCUG 31169 / CIP 107868 / KCTC 3260 / NRRL B-441) (Lactobacillus paracasei).